Reading from the N-terminus, the 104-residue chain is Complex III assembly factor LYRM7 (104 aa).

Ser-60 is subject to Phosphoserine.

It belongs to the complex I LYR family. In terms of assembly, interacts with UQCRFS1.

It localises to the mitochondrion matrix. Assembly factor required for Rieske Fe-S protein UQCRFS1 incorporation into the cytochrome b-c1 (CIII) complex. Functions as a chaperone, binding to this subunit within the mitochondrial matrix and stabilizing it prior to its translocation and insertion into the late CIII dimeric intermediate within the mitochondrial inner membrane. This chain is Complex III assembly factor LYRM7 (LYRM7), found in Pongo abelii (Sumatran orangutan).